Consider the following 356-residue polypeptide: Zinc finger CW-type PWWP domain protein 2 (356 aa).

The segment at 24–79 (MYVNKVWVQCENENCLKWRLLSSEDSAKVDHDEPWYCFMNTDSRYNNCSISEEDFP) adopts a CW-type zinc-finger fold. The Zn(2+) site is built by C33, C38, C60, and C71. Residues 98–162 (LGSLVLVKLQ…ATFVGHYSIT (65 aa)) enclose the PWWP domain. A disordered region spans residues 279-307 (QALQPTATPDESEEGHGEEINMGEKLSKC).

In terms of biological role, histone methylation reader which binds to non-methylated (H3K4me0), monomethylated (H3K4me1), dimethylated (H3K4me2) and trimethylated (H3K4me3) 'Lys-4' on histone H3. The order of binding preference is H3K4me3 &gt; H3K4me2 &gt; H3K4me1 &gt; H3K4me0. The sequence is that of Zinc finger CW-type PWWP domain protein 2 (ZCWPW2) from Homo sapiens (Human).